The primary structure comprises 413 residues: Probable tRNA sulfurtransferase (413 aa).

A THUMP domain is found at 61-171; that stretch reads TRVLDRVTRV…EDGTYIFTEK (111 aa). Residues 189-190, 214-215, Arg275, Gly297, and Gln306 each bind ATP; these read ML and HF.

Belongs to the ThiI family.

The protein localises to the cytoplasm. The catalysed reaction is [ThiI sulfur-carrier protein]-S-sulfanyl-L-cysteine + a uridine in tRNA + 2 reduced [2Fe-2S]-[ferredoxin] + ATP + H(+) = [ThiI sulfur-carrier protein]-L-cysteine + a 4-thiouridine in tRNA + 2 oxidized [2Fe-2S]-[ferredoxin] + AMP + diphosphate. It catalyses the reaction [ThiS sulfur-carrier protein]-C-terminal Gly-Gly-AMP + S-sulfanyl-L-cysteinyl-[cysteine desulfurase] + AH2 = [ThiS sulfur-carrier protein]-C-terminal-Gly-aminoethanethioate + L-cysteinyl-[cysteine desulfurase] + A + AMP + 2 H(+). It participates in cofactor biosynthesis; thiamine diphosphate biosynthesis. Its function is as follows. Catalyzes the ATP-dependent transfer of a sulfur to tRNA to produce 4-thiouridine in position 8 of tRNAs, which functions as a near-UV photosensor. Also catalyzes the transfer of sulfur to the sulfur carrier protein ThiS, forming ThiS-thiocarboxylate. This is a step in the synthesis of thiazole, in the thiamine biosynthesis pathway. The sulfur is donated as persulfide by IscS. This is Probable tRNA sulfurtransferase from Natranaerobius thermophilus (strain ATCC BAA-1301 / DSM 18059 / JW/NM-WN-LF).